The following is a 675-amino-acid chain: Putative L-type lectin-domain containing receptor kinase I.11 (675 aa).

A signal peptide spans 1-22 (MASERLHLILLVFFNHLTFLLS). Topologically, residues 23–292 (QQEEAGFIYN…PKAKQEQTSP (270 aa)) are extracellular. The tract at residues 27-263 (AGFIYNGFGQ…YQYILGWSFS (237 aa)) is legume-lectin like. Residues asparagine 60, asparagine 129, asparagine 186, asparagine 209, and asparagine 230 are each glycosylated (N-linked (GlcNAc...) asparagine). The helical transmembrane segment at 293–313 (LLIVLLMLLVLIMLAVLGGIY) threads the bilayer. At 314–675 (LYRRKKYAEV…THTITYGDGR (362 aa)) the chain is on the cytoplasmic side. Positions 348-620 (FDKDGRLGKG…QVIQYINQNL (273 aa)) constitute a Protein kinase domain. ATP contacts are provided by residues 354-362 (LGKGGFGEV) and lysine 376. Catalysis depends on aspartate 472, which acts as the Proton acceptor.

It in the C-terminal section; belongs to the protein kinase superfamily. Ser/Thr protein kinase family. In the N-terminal section; belongs to the leguminous lectin family.

The protein resides in the cell membrane. It carries out the reaction L-seryl-[protein] + ATP = O-phospho-L-seryl-[protein] + ADP + H(+). It catalyses the reaction L-threonyl-[protein] + ATP = O-phospho-L-threonyl-[protein] + ADP + H(+). The protein is Putative L-type lectin-domain containing receptor kinase I.11 (LECRK111) of Arabidopsis thaliana (Mouse-ear cress).